We begin with the raw amino-acid sequence, 353 residues long: Fe(3+) ions import ATP-binding protein FbpC (353 aa).

Residues 9 to 239 (VVFENVRKTF…PASSFIADFM (231 aa)) enclose the ABC transporter domain. 41–48 (GPSGCGKT) lines the ATP pocket.

This sequence belongs to the ABC transporter superfamily. Fe(3+) ion importer (TC 3.A.1.10) family. In terms of assembly, the complex is composed of two ATP-binding proteins (FbpC), two transmembrane proteins (FbpB) and a solute-binding protein (FbpA).

The protein resides in the cell inner membrane. It carries out the reaction Fe(3+)(out) + ATP + H2O = Fe(3+)(in) + ADP + phosphate + H(+). Part of the ABC transporter complex FbpABC involved in Fe(3+) ions import. Responsible for energy coupling to the transport system. In Agrobacterium fabrum (strain C58 / ATCC 33970) (Agrobacterium tumefaciens (strain C58)), this protein is Fe(3+) ions import ATP-binding protein FbpC.